The chain runs to 163 residues: Lipoprotein signal peptidase (163 aa).

3 helical membrane-spanning segments follow: residues 11–31 (ILIAVFVVIFDQVTKYIIATT), 63–83 (KMTFFFIITIIILIALVYFFI), and 88–108 (YNLFMQVAISLLFAGALGNFI). Catalysis depends on residues aspartate 118 and aspartate 136. A helical transmembrane segment spans residues 131-151 (IFNIADSSLTIGVILIIIALL).

It belongs to the peptidase A8 family.

It localises to the cell membrane. The enzyme catalyses Release of signal peptides from bacterial membrane prolipoproteins. Hydrolyzes -Xaa-Yaa-Zaa-|-(S,diacylglyceryl)Cys-, in which Xaa is hydrophobic (preferably Leu), and Yaa (Ala or Ser) and Zaa (Gly or Ala) have small, neutral side chains.. It participates in protein modification; lipoprotein biosynthesis (signal peptide cleavage). In terms of biological role, this protein specifically catalyzes the removal of signal peptides from prolipoproteins. This chain is Lipoprotein signal peptidase, found in Staphylococcus aureus (strain MRSA252).